A 106-amino-acid polypeptide reads, in one-letter code: Large ribosomal subunit protein P2 (106 aa).

The tract at residues 79–106 (GAGAVAEAKKEEPEEEEADDDMGFGLFD) is disordered. The span at 91 to 100 (PEEEEADDDM) shows a compositional bias: acidic residues.

Belongs to the eukaryotic ribosomal protein P1/P2 family. As to quaternary structure, P1 and P2 exist as dimers at the large ribosomal subunit. In terms of processing, phosphorylated.

Its function is as follows. Plays an important role in the elongation step of protein synthesis. The protein is Large ribosomal subunit protein P2 (LIP) of Leishmania infantum.